The sequence spans 78 residues: Structural DNA-binding protein p10 (78 aa).

Over residues 1-24 (MPTKAGTKSTANKKTTKGSSKSGS) the composition is skewed to low complexity. The tract at residues 1-41 (MPTKAGTKSTANKKTTKGSSKSGSPRGHTGKTHAPPSMHSG) is disordered.

Belongs to the asfivirus P10 family.

The protein localises to the virion. In terms of biological role, may play a role in genome packaging through direct interaction with viral DNA. Binds to ssDNA and dsDNA with the same apparent affinity in vitro. This chain is Structural DNA-binding protein p10, found in African swine fever virus (isolate Tick/South Africa/Pretoriuskop Pr4/1996) (ASFV).